Consider the following 135-residue polypeptide: Protein PsiE homolog (135 aa).

4 helical membrane passes run V20 to L40, Y54 to V74, H82 to V102, and P107 to A127.

The protein belongs to the PsiE family.

The protein resides in the cell inner membrane. This Yersinia pseudotuberculosis serotype IB (strain PB1/+) protein is Protein PsiE homolog.